A 907-amino-acid polypeptide reads, in one-letter code: Putative pentatricopeptide repeat-containing protein At5g59900 (907 aa).

PPR repeat units lie at residues 103 to 137 (STASFCILIHALVKANLFWPASSLLQTLLLRALKP), 155 to 185 (SSSSFDLLIQHYVRSRRVLDGVLVFKMMITK), 191 to 225 (EVRTLSALLHGLVKFRHFGLAMELFNDMVSVGIRP), 226 to 260 (DVYIYTGVIRSLCELKDLSRAKEMIAHMEATGCDV), 261 to 295 (NIVPYNVLIDGLCKKQKVWEAVGIKKDLAGKDLKP), 296 to 330 (DVVTYCTLVYGLCKVQEFEIGLEMMDEMLCLRFSP), 331 to 365 (SEAAVSSLVEGLRKRGKIEEALNLVKRVVDFGVSP), 366 to 400 (NLFVYNALIDSLCKGRKFHEAELLFDRMGKIGLRP), 401 to 435 (NDVTYSILIDMFCRRGKLDTALSFLGEMVDTGLKL), 436 to 470 (SVYPYNSLINGHCKFGDISAAEGFMAEMINKKLEP), 471 to 505 (TVVTYTSLMGGYCSKGKINKALRLYHEMTGKGIAP), 506 to 540 (SIYTFTTLLSGLFRAGLIRDAVKLFNEMAEWNVKP), 541 to 575 (NRVTYNVMIEGYCEEGDMSKAFEFLKEMTEKGIVP), 576 to 610 (DTYSYRPLIHGLCLTGQASEAKVFVDGLHKGNCEL), 611 to 645 (NEICYTGLLHGFCREGKLEEALSVCQEMVQRGVDL), 646 to 680 (DLVCYGVLIDGSLKHKDRKLFFGLLKEMHDRGLKP), 681 to 715 (DDVIYTSMIDAKSKTGDFKEAFGIWDLMINEGCVP), 716 to 750 (NEVTYTAVINGLCKAGFVNEAEVLCSKMQPVSSVP), 751 to 782 (NQVTYGCFLDILTKGEVDMQKAVELHNAILKG), 786 to 820 (NTATYNMLIRGFCRQGRIEEASELITRMIGDGVSP), 821 to 855 (DCITYTTMINELCRRNDVKKAIELWNSMTEKGIRP), and 856 to 890 (DRVAYNTLIHGCCVAGEMGKATELRNEMLRQGLIP). Residues 887–907 (GLIPNNKTSRTTTSNDTSSKS) are disordered. Over residues 891-907 (NNKTSRTTTSNDTSSKS) the composition is skewed to low complexity.

This sequence belongs to the PPR family. P subfamily.

The sequence is that of Putative pentatricopeptide repeat-containing protein At5g59900 from Arabidopsis thaliana (Mouse-ear cress).